The following is a 181-amino-acid chain: Cytochrome b6-f complex iron-sulfur subunit (181 aa).

A disordered region spans residues 1-35 (MAQTGNFKSPARMSSLGQGAAPASAGAVTGGKPRE). 2 helical membrane passes run 53–73 (VGGV…RYIV) and 114–134 (GGSL…VHWD). Positions 85-178 (LAVGPASDVP…VKIEDGKIVV (94 aa)) constitute a Rieske domain. 4 residues coordinate [2Fe-2S] cluster: Cys124, His126, Cys142, and His145. Cys129 and Cys144 are oxidised to a cystine.

The protein belongs to the Rieske iron-sulfur protein family. Requires [2Fe-2S] cluster as cofactor.

It localises to the cell inner membrane. The enzyme catalyses 2 oxidized [plastocyanin] + a plastoquinol + 2 H(+)(in) = 2 reduced [plastocyanin] + a plastoquinone + 4 H(+)(out). Component of the green S-bacteria bc-complex which consists of the Rieske protein and cytochrome b subunit and which appears to lack a cytochrome c1-equivalent. This complex has a comparatively low redox potential. This chain is Cytochrome b6-f complex iron-sulfur subunit (petC), found in Chlorobaculum tepidum (strain ATCC 49652 / DSM 12025 / NBRC 103806 / TLS) (Chlorobium tepidum).